Here is a 75-residue protein sequence, read N- to C-terminus: uncharacterized protein (75 aa).

A helical transmembrane segment spans residues 4-26; that stretch reads PSLLFLGFSGVLAFGEVGWVGVY.

It is found in the membrane. This is an uncharacterized protein from Treponema pallidum (strain Nichols).